The sequence spans 60 residues: Short neurotoxin 1 (60 aa).

Disulfide bonds link Cys-3-Cys-22, Cys-17-Cys-39, Cys-41-Cys-52, and Cys-53-Cys-58.

It belongs to the three-finger toxin family. Short-chain subfamily. Type I alpha-neurotoxin sub-subfamily. As to expression, expressed by the venom gland.

The protein resides in the secreted. Binds to muscle nicotinic acetylcholine receptor (nAChR) and inhibit acetylcholine from binding to the receptor, thereby impairing neuromuscular transmission. This Dendroaspis viridis (Western green mamba) protein is Short neurotoxin 1.